The chain runs to 180 residues: Large ribosomal subunit protein uL5 (180 aa).

It belongs to the universal ribosomal protein uL5 family. In terms of assembly, part of the 50S ribosomal subunit; part of the 5S rRNA/L5/L18/L25 subcomplex. Contacts the 5S rRNA and the P site tRNA. Forms a bridge to the 30S subunit in the 70S ribosome.

Its function is as follows. This is one of the proteins that bind and probably mediate the attachment of the 5S RNA into the large ribosomal subunit, where it forms part of the central protuberance. In the 70S ribosome it contacts protein S13 of the 30S subunit (bridge B1b), connecting the 2 subunits; this bridge is implicated in subunit movement. Contacts the P site tRNA; the 5S rRNA and some of its associated proteins might help stabilize positioning of ribosome-bound tRNAs. This is Large ribosomal subunit protein uL5 from Gloeothece citriformis (strain PCC 7424) (Cyanothece sp. (strain PCC 7424)).